A 539-amino-acid polypeptide reads, in one-letter code: Protein mushroom body miniature (539 aa).

Over residues 1–11 the composition is skewed to polar residues; sequence MHNSGGQSGWN. The interval 1–345 is disordered; sequence MHNSGGQSGW…EDDKKARKQK (345 aa). The segment covering 67–79 has biased composition (basic and acidic residues); sequence KFRDPQQELDNHQ. Over residues 80-89 the composition is skewed to basic residues; it reads PNKRGGRRNR. Residues 90 to 101 are compositionally biased toward gly residues; it reads GGGGGGGGWGGR. The span at 199 to 208 shows a compositional bias: basic and acidic residues; that stretch reads IKKEKEMEHK. A compositionally biased stretch (low complexity) spans 268 to 289; that stretch reads VASTPKPKAVKPVSSSDSSTSD. Phosphoserine is present on residues Ser288 and Ser290. 2 positions are modified to phosphothreonine: Thr292 and Thr327. The segment covering 327–336 has biased composition (acidic residues); it reads TDEEESTEPE. Residue Ser332 is modified to Phosphoserine. Thr333 is modified (phosphothreonine). 2 CCHC-type zinc fingers span residues 354 to 367 and 371 to 386; these read CGICDKKGHTSFQC and CRNCSGSYHGLKNCPN. Residues 421–513 are disordered; the sequence is VTAPVSAKPK…AASLPPQVFP (93 aa). Basic residues predominate over residues 428-447; sequence KPKKDKKASIKKIKKSSQKR. Residues 456–480 are compositionally biased toward acidic residues; that stretch reads DEEDDEEDDDEDEDDSSESDDSESS.

Post-translationally, may be phosphorylated in vivo by CkIIalpha. mbm and CkIIalpha colocalize to the nucleolus and mbm is phosphorylated in vitro by CkIIalpha. Shows widespread expression in third instar larval brain with no apparent difference between males and females (at protein level). Detected at low levels in the mushroom body neuropil and is also expressed in many cells of the brain outside the mushroom body (at protein level). Not detected in third instar larval brain cells in anaphase (at protein level).

Its subcellular location is the nucleus. The protein localises to the nucleolus. The protein resides in the cytoplasm. Required for small ribosomal subunit biogenesis in neuroblasts. Plays a role in mushroom body development. The chain is Protein mushroom body miniature from Drosophila melanogaster (Fruit fly).